Reading from the N-terminus, the 84-residue chain is Small ribosomal subunit protein uS17 (84 aa).

The protein belongs to the universal ribosomal protein uS17 family. Part of the 30S ribosomal subunit.

In terms of biological role, one of the primary rRNA binding proteins, it binds specifically to the 5'-end of 16S ribosomal RNA. The sequence is that of Small ribosomal subunit protein uS17 from Blochmanniella pennsylvanica (strain BPEN).